We begin with the raw amino-acid sequence, 203 residues long: Protein-methionine-sulfoxide reductase heme-binding subunit MsrQ (203 aa).

The next 6 helical transmembrane spans lie at 10–30 (IFVV…MSLL), 42–62 (LGLG…LQKL), 75–95 (LGLW…FFIL), 110–130 (PYII…ITSN), 147–167 (LVYA…RSDL), and 169–189 (EWSI…PAVA).

Belongs to the MsrQ family. Heterodimer of a catalytic subunit (MsrP) and a heme-binding subunit (MsrQ). The cofactor is FMN. It depends on heme b as a cofactor.

It is found in the cell inner membrane. Part of the MsrPQ system that repairs oxidized periplasmic proteins containing methionine sulfoxide residues (Met-O), using respiratory chain electrons. Thus protects these proteins from oxidative-stress damage caused by reactive species of oxygen and chlorine generated by the host defense mechanisms. MsrPQ is essential for the maintenance of envelope integrity under bleach stress, rescuing a wide series of structurally unrelated periplasmic proteins from methionine oxidation. MsrQ provides electrons for reduction to the reductase catalytic subunit MsrP, using the quinone pool of the respiratory chain. The protein is Protein-methionine-sulfoxide reductase heme-binding subunit MsrQ of Pseudomonas putida (strain GB-1).